The following is a 384-amino-acid chain: FAD-dependent urate hydroxylase (384 aa).

FAD is bound by residues G11, 30–31 (EA), S43, and V125. Residues N178, R204, and 216–218 (YFF) each bind substrate. Residues D285 and 295–299 (GQGGC) each bind FAD.

This sequence belongs to the FAD-dependent urate hydroxylase family. FAD serves as cofactor.

The catalysed reaction is urate + NADH + O2 + H(+) = 5-hydroxyisourate + NAD(+) + H2O. It participates in purine metabolism; urate degradation. Functionally, catalyzes the hydroxylation of uric acid to 5-hydroxyisourate. This Klebsiella oxytoca protein is FAD-dependent urate hydroxylase (hpxO).